The chain runs to 355 residues: N-acylethanolamine-hydrolyzing acid amidase (355 aa).

The signal sequence occupies residues 1–17 (MLLLQIILLLLPVICSA). Cys-122 functions as the Nucleophile in the catalytic mechanism. Asn-150, Asn-160, and Asn-328 each carry an N-linked (GlcNAc...) asparagine glycan.

Belongs to the acid ceramidase family. As to quaternary structure, heterodimer of an alpha and a beta subunit, produced by autocatalytic cleavage. Post-translationally, N-glycosylated. Autoproteolytic cleavage at pH 4.5 gives rise to the alpha and beta subunit. Cleavage gives rise to a conformation change that activates the enzyme. The same catalytic Cys residue mediates the autoproteolytic cleavage and subsequent hydrolysis of lipid substrates.

It is found in the lysosome. It localises to the membrane. It carries out the reaction N-hexadecanoylethanolamine + H2O = ethanolamine + hexadecanoate. The catalysed reaction is an N-(long-chain fatty acyl)ethanolamine + H2O = a long-chain fatty acid + ethanolamine. The protein operates within lipid metabolism; fatty acid metabolism. Degrades bioactive fatty acid amides, such as N-palmitoylethanolamine, to ethanolamine and free fatty acids. The sequence is that of N-acylethanolamine-hydrolyzing acid amidase from Caenorhabditis elegans.